A 228-amino-acid polypeptide reads, in one-letter code: Phosphatidylserine decarboxylase proenzyme (228 aa).

Residue Ser-197 is the Schiff-base intermediate with substrate; via pyruvic acid of the active site. Ser-197 carries the pyruvic acid (Ser); by autocatalysis modification.

The protein belongs to the phosphatidylserine decarboxylase family. PSD-A subfamily. In terms of assembly, heterodimer of a large membrane-associated beta subunit and a small pyruvoyl-containing alpha subunit. The cofactor is pyruvate. In terms of processing, is synthesized initially as an inactive proenzyme. Formation of the active enzyme involves a self-maturation process in which the active site pyruvoyl group is generated from an internal serine residue via an autocatalytic post-translational modification. Two non-identical subunits are generated from the proenzyme in this reaction, and the pyruvate is formed at the N-terminus of the alpha chain, which is derived from the carboxyl end of the proenzyme. The post-translation cleavage follows an unusual pathway, termed non-hydrolytic serinolysis, in which the side chain hydroxyl group of the serine supplies its oxygen atom to form the C-terminus of the beta chain, while the remainder of the serine residue undergoes an oxidative deamination to produce ammonia and the pyruvoyl prosthetic group on the alpha chain.

It localises to the cell membrane. The catalysed reaction is a 1,2-diacyl-sn-glycero-3-phospho-L-serine + H(+) = a 1,2-diacyl-sn-glycero-3-phosphoethanolamine + CO2. Its pathway is phospholipid metabolism; phosphatidylethanolamine biosynthesis; phosphatidylethanolamine from CDP-diacylglycerol: step 2/2. Functionally, catalyzes the formation of phosphatidylethanolamine (PtdEtn) from phosphatidylserine (PtdSer). In Bacteroides fragilis (strain ATCC 25285 / DSM 2151 / CCUG 4856 / JCM 11019 / LMG 10263 / NCTC 9343 / Onslow / VPI 2553 / EN-2), this protein is Phosphatidylserine decarboxylase proenzyme.